The following is a 408-amino-acid chain: Arylacetamide deacetylase-like 3 (408 aa).

Helical transmembrane passes span 2–22 (VVLALTLLVGSVAVFSLGSLL), 46–66 (ILSCLFHLTMTWGMIFEKLGL), and 109–129 (SSIPRLGIIFFHGGGTIIGSL). An Involved in the stabilization of the negatively charged intermediate by the formation of the oxyanion hole motif is present at residues 120–122 (HGG). Residue S194 is part of the active site. A glycan (N-linked (GlcNAc...) asparagine) is linked at N321. Residues D348 and H378 contribute to the active site.

It belongs to the 'GDXG' lipolytic enzyme family.

It localises to the membrane. This chain is Arylacetamide deacetylase-like 3 (Aadacl3), found in Mus musculus (Mouse).